Reading from the N-terminus, the 39-residue chain is MTVSISVPSASTSDFKKFAINHLDILPRQAGVQYLFNLT.

This is an uncharacterized protein from Haemophilus influenzae (strain ATCC 51907 / DSM 11121 / KW20 / Rd).